The primary structure comprises 208 residues: NADH-ubiquinone oxidoreductase chain 4 (208 aa).

6 helical membrane-spanning segments follow: residues 23–43 (VWIN…VTLW), 60–80 (SLSS…LLAS), 93–113 (KMYI…FSAN), 114–134 (ELIM…IIIT), 147–167 (LYFL…LISI), and 188–208 (PTWS…IKMP).

The protein belongs to the complex I subunit 4 family. In terms of assembly, core subunit of respiratory chain NADH dehydrogenase (Complex I) which is composed of 45 different subunits.

The protein localises to the mitochondrion inner membrane. The catalysed reaction is a ubiquinone + NADH + 5 H(+)(in) = a ubiquinol + NAD(+) + 4 H(+)(out). Core subunit of the mitochondrial membrane respiratory chain NADH dehydrogenase (Complex I) which catalyzes electron transfer from NADH through the respiratory chain, using ubiquinone as an electron acceptor. Essential for the catalytic activity and assembly of complex I. In Phodopus sungorus (Striped hairy-footed hamster), this protein is NADH-ubiquinone oxidoreductase chain 4 (MT-ND4).